The primary structure comprises 277 residues: NH(3)-dependent NAD(+) synthetase (277 aa).

Residue 46 to 53 coordinates ATP; sequence GISGGQDS. A Mg(2+)-binding site is contributed by aspartate 52. Position 141 (arginine 141) interacts with deamido-NAD(+). An ATP-binding site is contributed by threonine 161. Mg(2+) is bound at residue glutamate 166. The deamido-NAD(+) site is built by lysine 174 and aspartate 181. ATP contacts are provided by lysine 190 and threonine 212. A deamido-NAD(+)-binding site is contributed by 262-263; it reads HK.

This sequence belongs to the NAD synthetase family. In terms of assembly, homodimer.

It catalyses the reaction deamido-NAD(+) + NH4(+) + ATP = AMP + diphosphate + NAD(+) + H(+). The protein operates within cofactor biosynthesis; NAD(+) biosynthesis; NAD(+) from deamido-NAD(+) (ammonia route): step 1/1. Functionally, catalyzes the ATP-dependent amidation of deamido-NAD to form NAD. Uses ammonia as a nitrogen source. The protein is NH(3)-dependent NAD(+) synthetase of Corynebacterium efficiens (strain DSM 44549 / YS-314 / AJ 12310 / JCM 11189 / NBRC 100395).